The chain runs to 220 residues: Uracil-DNA glycosylase (220 aa).

Catalysis depends on Asp-61, which acts as the Proton acceptor.

The protein belongs to the uracil-DNA glycosylase (UDG) superfamily. UNG family.

Its subcellular location is the cytoplasm. The enzyme catalyses Hydrolyzes single-stranded DNA or mismatched double-stranded DNA and polynucleotides, releasing free uracil.. Excises uracil residues from the DNA which can arise as a result of misincorporation of dUMP residues by DNA polymerase or due to deamination of cytosine. The polypeptide is Uracil-DNA glycosylase (Glaesserella parasuis serovar 5 (strain SH0165) (Haemophilus parasuis)).